The sequence spans 482 residues: Methylenetetrahydrofolate--tRNA-(uracil-5-)-methyltransferase TrmFO (482 aa).

20-25 serves as a coordination point for FAD; sequence GGGLAG.

It belongs to the MnmG family. TrmFO subfamily. FAD is required as a cofactor.

The protein resides in the cytoplasm. It carries out the reaction uridine(54) in tRNA + (6R)-5,10-methylene-5,6,7,8-tetrahydrofolate + NADH + H(+) = 5-methyluridine(54) in tRNA + (6S)-5,6,7,8-tetrahydrofolate + NAD(+). It catalyses the reaction uridine(54) in tRNA + (6R)-5,10-methylene-5,6,7,8-tetrahydrofolate + NADPH + H(+) = 5-methyluridine(54) in tRNA + (6S)-5,6,7,8-tetrahydrofolate + NADP(+). Functionally, catalyzes the folate-dependent formation of 5-methyl-uridine at position 54 (M-5-U54) in all tRNAs. The protein is Methylenetetrahydrofolate--tRNA-(uracil-5-)-methyltransferase TrmFO of Rhodopseudomonas palustris (strain HaA2).